A 59-amino-acid polypeptide reads, in one-letter code: Putative antitoxin AF_1090 (59 aa).

Belongs to the UPF0165 family.

Possibly the antitoxin component of a type II toxin-antitoxin (TA) system. This Archaeoglobus fulgidus (strain ATCC 49558 / DSM 4304 / JCM 9628 / NBRC 100126 / VC-16) protein is Putative antitoxin AF_1090.